The primary structure comprises 680 residues: Harmonin-binding protein USHBP1 (680 aa).

Residues 1–15 (MSARATRPRSRRGRH) are compositionally biased toward basic residues. Disordered stretches follow at residues 1–51 (MSAR…YLGP) and 134–161 (KSVE…PGQQ). Residues 179–218 (NREDELACTQASLQDAQAEKETLQRQVQELEDSLMQMEAS) adopt a coiled-coil conformation. Disordered regions lie at residues 220–247 (PTPI…VPQD) and 384–405 (TMEV…PTPE). 2 coiled-coil regions span residues 363 to 386 (TKGD…ATME) and 467 to 506 (QIQQ…LRAQ). The disordered stretch occupies residues 524–549 (FAGDGSSGGSSEDPSSEEEAGEDRQQ). Residues 573-662 (QELSASLARA…QAEELAVLTA (90 aa)) adopt a coiled-coil conformation.

The protein belongs to the MCC family. Interacts via its C-terminus with the first PDZ domain of USH1C.

This chain is Harmonin-binding protein USHBP1, found in Mus musculus (Mouse).